Consider the following 234-residue polypeptide: UPF0173 metal-dependent hydrolase R01310 (234 aa).

Belongs to the UPF0173 family.

The polypeptide is UPF0173 metal-dependent hydrolase R01310 (Rhizobium meliloti (strain 1021) (Ensifer meliloti)).